We begin with the raw amino-acid sequence, 314 residues long: Ornithine carbamoyltransferase (314 aa).

Residues 58–61 (STRT), Gln85, Arg109, and 136–139 (HPAQ) each bind carbamoyl phosphate. Residues Asn169, Asp233, and 237-238 (SM) each bind L-ornithine. Residues 273-274 (CL) and Arg301 each bind carbamoyl phosphate.

This sequence belongs to the aspartate/ornithine carbamoyltransferase superfamily. OTCase family.

The protein resides in the cytoplasm. It catalyses the reaction carbamoyl phosphate + L-ornithine = L-citrulline + phosphate + H(+). Its pathway is amino-acid degradation; L-arginine degradation via ADI pathway; carbamoyl phosphate from L-arginine: step 2/2. Functionally, reversibly catalyzes the transfer of the carbamoyl group from carbamoyl phosphate (CP) to the N(epsilon) atom of ornithine (ORN) to produce L-citrulline. This is Ornithine carbamoyltransferase from Staphylothermus marinus (strain ATCC 43588 / DSM 3639 / JCM 9404 / F1).